The following is a 161-amino-acid chain: 6,7-dimethyl-8-ribityllumazine synthase (161 aa).

5-amino-6-(D-ribitylamino)uracil-binding positions include tryptophan 26, 58–60 (SFE), and 81–83 (VVI). 86 to 87 (GT) contacts (2S)-2-hydroxy-3-oxobutyl phosphate. Catalysis depends on histidine 89, which acts as the Proton donor. Residue phenylalanine 114 coordinates 5-amino-6-(D-ribitylamino)uracil. Position 128 (arginine 128) interacts with (2S)-2-hydroxy-3-oxobutyl phosphate.

It belongs to the DMRL synthase family.

The enzyme catalyses (2S)-2-hydroxy-3-oxobutyl phosphate + 5-amino-6-(D-ribitylamino)uracil = 6,7-dimethyl-8-(1-D-ribityl)lumazine + phosphate + 2 H2O + H(+). Its pathway is cofactor biosynthesis; riboflavin biosynthesis; riboflavin from 2-hydroxy-3-oxobutyl phosphate and 5-amino-6-(D-ribitylamino)uracil: step 1/2. Catalyzes the formation of 6,7-dimethyl-8-ribityllumazine by condensation of 5-amino-6-(D-ribitylamino)uracil with 3,4-dihydroxy-2-butanone 4-phosphate. This is the penultimate step in the biosynthesis of riboflavin. The polypeptide is 6,7-dimethyl-8-ribityllumazine synthase (Streptomyces coelicolor (strain ATCC BAA-471 / A3(2) / M145)).